The sequence spans 510 residues: O-acetyltransferase pyr7 (510 aa).

The protein belongs to the fumigaclavine B O-acetyltransferase family.

The protein operates within secondary metabolite biosynthesis; terpenoid biosynthesis. In terms of biological role, O-acetyltransferase; part of the gene cluster that mediates the biosynthesis of pyripyropene A, a specific human acyl-coenzyme A:cholesterol acyltransferase 2 inhibitor. The first step of the pathway is the synthesis of nicotinyl-CoA from nicotinic acid by the nicotinic acid-CoA ligase pyr1. Nicotinyl-CoA is then a substrate of polyketide synthase pyr2 to produce 4-hydroxy-6-(3-pyridinyl)-2H-pyran-2-one (HPPO) which is further prenylated by the polyprenyl transferase pyr6 to yield farnesyl-HPPO. The next steps consist of an epoxidation of farnesyl-HPPO to epoxyfarnesyl-HPPO by FAD-dependent monooxygenase pyr5 and a cyclization of the terpenoid portion by the terpene cyclase pyr4 to yield deacetyl-pyripyropene E. The 2 cytochrome P450 monooxygenases pyr3 and pyr9, and the 2 acetyltransferases pyr7 and pyr8 are involved in the conversion of deacetyl-pyripyropene E into pyripyropene A through several cycles of oxidation and acetylation steps. Pyr7 acetylates deacetyl-pyripyropene E to pyripyropene E which is oxidized to 11-deacetyl-pyripyropene O by pyr3, which is in turn acetylated into pyripyropene O by pyr8. Pyripyropene O is then oxidized to deacetyl-pyripyropene A by pyr9. Deacetyl-pyripyropene A is finally acetylated to pyripyropene A by pyr8. In Aspergillus fumigatus (strain ATCC MYA-4609 / CBS 101355 / FGSC A1100 / Af293) (Neosartorya fumigata), this protein is O-acetyltransferase pyr7.